A 335-amino-acid polypeptide reads, in one-letter code: Ketol-acid reductoisomerase (NADP(+)) (335 aa).

The KARI N-terminal Rossmann domain maps to 1–182 (MATIIYDNET…GATRAGVYET (182 aa)). NADP(+) contacts are provided by residues 25–28 (YGSQ), Arg-48, Ser-51, Ser-53, and 83–86 (DEKQ). His-108 is a catalytic residue. Gly-134 contacts NADP(+). The KARI C-terminal knotted domain maps to 183–328 (TFREETETDL…KEIRANIPWL (146 aa)). Mg(2+) is bound by residues Asp-191, Glu-195, Glu-227, and Glu-231. Residue Ser-252 participates in substrate binding.

The protein belongs to the ketol-acid reductoisomerase family. Mg(2+) is required as a cofactor.

It catalyses the reaction (2R)-2,3-dihydroxy-3-methylbutanoate + NADP(+) = (2S)-2-acetolactate + NADPH + H(+). The enzyme catalyses (2R,3R)-2,3-dihydroxy-3-methylpentanoate + NADP(+) = (S)-2-ethyl-2-hydroxy-3-oxobutanoate + NADPH + H(+). It functions in the pathway amino-acid biosynthesis; L-isoleucine biosynthesis; L-isoleucine from 2-oxobutanoate: step 2/4. It participates in amino-acid biosynthesis; L-valine biosynthesis; L-valine from pyruvate: step 2/4. Functionally, involved in the biosynthesis of branched-chain amino acids (BCAA). Catalyzes an alkyl-migration followed by a ketol-acid reduction of (S)-2-acetolactate (S2AL) to yield (R)-2,3-dihydroxy-isovalerate. In the isomerase reaction, S2AL is rearranged via a Mg-dependent methyl migration to produce 3-hydroxy-3-methyl-2-ketobutyrate (HMKB). In the reductase reaction, this 2-ketoacid undergoes a metal-dependent reduction by NADPH to yield (R)-2,3-dihydroxy-isovalerate. This chain is Ketol-acid reductoisomerase (NADP(+)), found in Methanosarcina acetivorans (strain ATCC 35395 / DSM 2834 / JCM 12185 / C2A).